A 122-amino-acid polypeptide reads, in one-letter code: Large ribosomal subunit protein uL14 (122 aa).

Belongs to the universal ribosomal protein uL14 family. In terms of assembly, part of the 50S ribosomal subunit. Forms a cluster with proteins L3 and L19. In the 70S ribosome, L14 and L19 interact and together make contacts with the 16S rRNA in bridges B5 and B8.

Binds to 23S rRNA. Forms part of two intersubunit bridges in the 70S ribosome. This Thermobifida fusca (strain YX) protein is Large ribosomal subunit protein uL14.